Reading from the N-terminus, the 337-residue chain is Ketol-acid reductoisomerase (NADP(+)) (337 aa).

One can recognise a KARI N-terminal Rossmann domain in the interval 3–183 (VEMFYDDDAD…GGARAGVIKT (181 aa)). NADP(+) is bound by residues 26 to 29 (YGSQ), K49, S52, S54, and 84 to 87 (DTAQ). H109 is a catalytic residue. An NADP(+)-binding site is contributed by G135. Residues 184–329 (TFKEETETDL…KKLRDLMSWV (146 aa)) form the KARI C-terminal knotted domain. Mg(2+) contacts are provided by D192, E196, E228, and E232. S253 lines the substrate pocket.

Belongs to the ketol-acid reductoisomerase family. Requires Mg(2+) as cofactor.

It catalyses the reaction (2R)-2,3-dihydroxy-3-methylbutanoate + NADP(+) = (2S)-2-acetolactate + NADPH + H(+). The enzyme catalyses (2R,3R)-2,3-dihydroxy-3-methylpentanoate + NADP(+) = (S)-2-ethyl-2-hydroxy-3-oxobutanoate + NADPH + H(+). It functions in the pathway amino-acid biosynthesis; L-isoleucine biosynthesis; L-isoleucine from 2-oxobutanoate: step 2/4. It participates in amino-acid biosynthesis; L-valine biosynthesis; L-valine from pyruvate: step 2/4. In terms of biological role, involved in the biosynthesis of branched-chain amino acids (BCAA). Catalyzes an alkyl-migration followed by a ketol-acid reduction of (S)-2-acetolactate (S2AL) to yield (R)-2,3-dihydroxy-isovalerate. In the isomerase reaction, S2AL is rearranged via a Mg-dependent methyl migration to produce 3-hydroxy-3-methyl-2-ketobutyrate (HMKB). In the reductase reaction, this 2-ketoacid undergoes a metal-dependent reduction by NADPH to yield (R)-2,3-dihydroxy-isovalerate. This is Ketol-acid reductoisomerase (NADP(+)) from Mycobacterium sp. (strain JLS).